We begin with the raw amino-acid sequence, 89 residues long: MSLNAETKAAIVADYARGEGDTGSPEVQVALLTASINHLQGHFQAHKGDHHSRRGLLRMVSRRRKLLDYLKGKDLARYQDLIKRLGLRR.

This sequence belongs to the universal ribosomal protein uS15 family. Part of the 30S ribosomal subunit. Forms a bridge to the 50S subunit in the 70S ribosome, contacting the 23S rRNA.

Its function is as follows. One of the primary rRNA binding proteins, it binds directly to 16S rRNA where it helps nucleate assembly of the platform of the 30S subunit by binding and bridging several RNA helices of the 16S rRNA. Forms an intersubunit bridge (bridge B4) with the 23S rRNA of the 50S subunit in the ribosome. This Vibrio vulnificus (strain YJ016) protein is Small ribosomal subunit protein uS15.